A 117-amino-acid chain; its full sequence is Large ribosomal subunit protein bL19 (117 aa).

The protein belongs to the bacterial ribosomal protein bL19 family.

Functionally, this protein is located at the 30S-50S ribosomal subunit interface and may play a role in the structure and function of the aminoacyl-tRNA binding site. The protein is Large ribosomal subunit protein bL19 of Alkalilimnicola ehrlichii (strain ATCC BAA-1101 / DSM 17681 / MLHE-1).